A 609-amino-acid chain; its full sequence is UvrABC system protein C (609 aa).

Residues 13–91 form the GIY-YIG domain; it reads HQPGVYRMFD…IKAFQPRYNV (79 aa). Positions 201–236 constitute a UVR domain; that stretch reads QQVLEHLIKKMEQASMQLNFEQAAYFRDQIQAIRAV.

It belongs to the UvrC family. As to quaternary structure, interacts with UvrB in an incision complex.

The protein localises to the cytoplasm. In terms of biological role, the UvrABC repair system catalyzes the recognition and processing of DNA lesions. UvrC both incises the 5' and 3' sides of the lesion. The N-terminal half is responsible for the 3' incision and the C-terminal half is responsible for the 5' incision. The protein is UvrABC system protein C of Histophilus somni (strain 2336) (Haemophilus somnus).